A 514-amino-acid chain; its full sequence is Cytochrome P450 monooxygenase FUS8 (514 aa).

Residues 28–48 (LTVTKAVGAFIVLFIIIPKVF) form a helical membrane-spanning segment. N-linked (GlcNAc...) asparagine glycans are attached at residues N225 and N443. C460 lines the heme pocket.

The protein belongs to the cytochrome P450 family. It depends on heme as a cofactor.

It is found in the membrane. The protein operates within mycotoxin biosynthesis. Its function is as follows. Cytochrome P450 monooxygenase; part of the gene cluster that mediates the biosynthesis of the mycotoxin fusarin C. Within the cluster, FUS1, FUS2, FUS8 and FUS9 are sufficient for fusarin production. The roles of the other FUS members are yet undetermined. The fusarin C synthetase FUS1 is responsible for the condensation of one acetyl-coenzyme A (CoA) unit with six malonyl-CoA units and the amide linkage of the arising heptaketide and homoserine, subsequently releasing the first intermediate, prefusarin, as an alcohol with an open ring structure. The cytochrome P450 monooxygenase FUS8 participates in multiple oxidation processes at carbon C-20 and is able to use the FUS1 product as substrate, resulting in formation of 20-hydroxy-prefusarin. This reaction seems to be essential before the 2-pyrrolidone ring closure can be catalyzed by FUS2, generating 20-hydroxy-fusarin. FUS8 is able to further oxidizes carbon C-20 after ring closure, resulting in the formation of carboxy-fusarin C. As the last step, FUS9 methylates the hydroxyl group at C-21 to generate fusarin C. Fusarin C can then rearrange to epi-fusarin C, the (z)-isomers, and fusarin A and fusarin D. In Gibberella moniliformis (strain M3125 / FGSC 7600) (Maize ear and stalk rot fungus), this protein is Cytochrome P450 monooxygenase FUS8.